We begin with the raw amino-acid sequence, 217 residues long: ATP phosphoribosyltransferase (217 aa).

This sequence belongs to the ATP phosphoribosyltransferase family. Short subfamily. Heteromultimer composed of HisG and HisZ subunits.

The protein localises to the cytoplasm. It catalyses the reaction 1-(5-phospho-beta-D-ribosyl)-ATP + diphosphate = 5-phospho-alpha-D-ribose 1-diphosphate + ATP. It participates in amino-acid biosynthesis; L-histidine biosynthesis; L-histidine from 5-phospho-alpha-D-ribose 1-diphosphate: step 1/9. Its function is as follows. Catalyzes the condensation of ATP and 5-phosphoribose 1-diphosphate to form N'-(5'-phosphoribosyl)-ATP (PR-ATP). Has a crucial role in the pathway because the rate of histidine biosynthesis seems to be controlled primarily by regulation of HisG enzymatic activity. This is ATP phosphoribosyltransferase from Parasynechococcus marenigrum (strain WH8102).